Consider the following 430-residue polypeptide: Enolase (430 aa).

Gln-163 serves as a coordination point for (2R)-2-phosphoglycerate. Glu-205 (proton donor) is an active-site residue. Residues Asp-242, Glu-287, and Asp-314 each contribute to the Mg(2+) site. (2R)-2-phosphoglycerate is bound by residues Lys-339, Arg-368, Ser-369, and Lys-390. Lys-339 serves as the catalytic Proton acceptor.

This sequence belongs to the enolase family. The cofactor is Mg(2+).

The protein localises to the cytoplasm. The protein resides in the secreted. Its subcellular location is the cell surface. The enzyme catalyses (2R)-2-phosphoglycerate = phosphoenolpyruvate + H2O. It functions in the pathway carbohydrate degradation; glycolysis; pyruvate from D-glyceraldehyde 3-phosphate: step 4/5. Its function is as follows. Catalyzes the reversible conversion of 2-phosphoglycerate (2-PG) into phosphoenolpyruvate (PEP). It is essential for the degradation of carbohydrates via glycolysis. This chain is Enolase, found in Bacillus cytotoxicus (strain DSM 22905 / CIP 110041 / 391-98 / NVH 391-98).